Here is a 163-residue protein sequence, read N- to C-terminus: uncharacterized protein (163 aa).

It belongs to the ycf51 family.

The protein localises to the plastid. Its subcellular location is the cyanelle. This is an uncharacterized protein from Cyanophora paradoxa.